Reading from the N-terminus, the 274-residue chain is Rhamnulose-1-phosphate aldolase (274 aa).

The active site involves E117. The Zn(2+) site is built by H141, H143, and H212.

The protein belongs to the aldolase class II family. RhaD subfamily. In terms of assembly, homotetramer. The cofactor is Zn(2+).

The protein resides in the cytoplasm. The enzyme catalyses L-rhamnulose 1-phosphate = (S)-lactaldehyde + dihydroxyacetone phosphate. It functions in the pathway carbohydrate degradation; L-rhamnose degradation; glycerone phosphate from L-rhamnose: step 3/3. Catalyzes the reversible cleavage of L-rhamnulose-1-phosphate to dihydroxyacetone phosphate (DHAP) and L-lactaldehyde. This chain is Rhamnulose-1-phosphate aldolase, found in Escherichia coli O127:H6 (strain E2348/69 / EPEC).